A 257-amino-acid chain; its full sequence is Hydroxyacylglutathione hydrolase (257 aa).

The Zn(2+) site is built by His54, His56, Asp58, His59, His113, Asp137, and His175.

The protein belongs to the metallo-beta-lactamase superfamily. Glyoxalase II family. In terms of assembly, monomer. Zn(2+) is required as a cofactor.

It catalyses the reaction an S-(2-hydroxyacyl)glutathione + H2O = a 2-hydroxy carboxylate + glutathione + H(+). It participates in secondary metabolite metabolism; methylglyoxal degradation; (R)-lactate from methylglyoxal: step 2/2. Thiolesterase that catalyzes the hydrolysis of S-D-lactoyl-glutathione to form glutathione and D-lactic acid. The polypeptide is Hydroxyacylglutathione hydrolase (Gloeothece citriformis (strain PCC 7424) (Cyanothece sp. (strain PCC 7424))).